Consider the following 108-residue polypeptide: Evasin P1229 (108 aa).

The first 31 residues, 1–31 (MEVRTFAFLQIVVFVALGIQLFAAVTDAADA), serve as a signal peptide directing secretion. 3 cysteine pairs are disulfide-bonded: cysteine 41–cysteine 63, cysteine 45–cysteine 65, and cysteine 56–cysteine 76. N-linked (GlcNAc...) asparagine glycosylation occurs at asparagine 44. Residues 88–108 (GDPNNSDLDAATPRHPDASSR) form a disordered region. Asparagine 91 is a glycosylation site (N-linked (GlcNAc...) asparagine). Residues 99–108 (TPRHPDASSR) are compositionally biased toward basic and acidic residues.

The protein resides in the secreted. In terms of biological role, salivary chemokine-binding protein which binds to host chemokines CXCL1 and CXCL8. This is Evasin P1229 from Ixodes ricinus (Common tick).